The following is a 303-amino-acid chain: MLSLLSSDSSLLSLLFLFLIPCLFITSYIGFPVFLLKLIGLIKIKAARDNEKRDEGTYVVREDGLQRELMPRHVAFILDGNRRWAKRAGLTTSQGHEAGAKRLIDIAELCFELGVHTVSAFAFSTENWGRDKIEIDNLMSLIQHYRNKSNIKFFHRSEVRVSVIGNKTKIPESLLKEIHEIEEATKGYKNKHLIMAVDYSGKFDIMHACKSLVKKSEKGLIREEDVDEALIERELLTNCSDFPSPDLMIRTSGEQRISNFFLWQLAYSELFFSPVFWPDFDKDKLLEALASYQRRERRFGCRV.

Residues 14 to 34 form a helical membrane-spanning segment; that stretch reads LLFLFLIPCLFITSYIGFPVF.

Belongs to the UPP synthase family. The cofactor is Mg(2+). In terms of tissue distribution, expressed in low levels in the whole plant. Preferentially expressed in roots.

It localises to the endoplasmic reticulum membrane. It catalyses the reaction n isopentenyl diphosphate + (2E,6E)-farnesyl diphosphate = a di-trans,poly-cis-polyprenyl diphosphate + n diphosphate. Its pathway is protein modification; protein glycosylation. Its function is as follows. Catalyzes cis-prenyl chain elongation to produce the polyprenyl backbone of dolichol, a glycosyl carrier-lipid required for the biosynthesis of several classes of glycoprotein. This Arabidopsis thaliana (Mouse-ear cress) protein is Dehydrodolichyl diphosphate synthase 1 (DPS).